The sequence spans 220 residues: 7-cyano-7-deazaguanine synthase (220 aa).

11–21 is an ATP binding site; sequence VSGGMDSVTLM. 4 residues coordinate Zn(2+): Cys186, Cys194, Cys197, and Cys200.

Belongs to the QueC family. It depends on Zn(2+) as a cofactor.

It carries out the reaction 7-carboxy-7-deazaguanine + NH4(+) + ATP = 7-cyano-7-deazaguanine + ADP + phosphate + H2O + H(+). The protein operates within purine metabolism; 7-cyano-7-deazaguanine biosynthesis. Functionally, catalyzes the ATP-dependent conversion of 7-carboxy-7-deazaguanine (CDG) to 7-cyano-7-deazaguanine (preQ(0)). The chain is 7-cyano-7-deazaguanine synthase from Porphyromonas gingivalis (strain ATCC 33277 / DSM 20709 / CIP 103683 / JCM 12257 / NCTC 11834 / 2561).